The following is a 160-amino-acid chain: SsrA-binding protein (160 aa).

Residues 131–160 (KKEYDKRHTERERDSDRELQRAVRTKGKDD) are disordered.

This sequence belongs to the SmpB family.

It localises to the cytoplasm. In terms of biological role, required for rescue of stalled ribosomes mediated by trans-translation. Binds to transfer-messenger RNA (tmRNA), required for stable association of tmRNA with ribosomes. tmRNA and SmpB together mimic tRNA shape, replacing the anticodon stem-loop with SmpB. tmRNA is encoded by the ssrA gene; the 2 termini fold to resemble tRNA(Ala) and it encodes a 'tag peptide', a short internal open reading frame. During trans-translation Ala-aminoacylated tmRNA acts like a tRNA, entering the A-site of stalled ribosomes, displacing the stalled mRNA. The ribosome then switches to translate the ORF on the tmRNA; the nascent peptide is terminated with the 'tag peptide' encoded by the tmRNA and targeted for degradation. The ribosome is freed to recommence translation, which seems to be the essential function of trans-translation. The sequence is that of SsrA-binding protein from Pseudomonas syringae pv. tomato (strain ATCC BAA-871 / DC3000).